Reading from the N-terminus, the 348-residue chain is Phospho-2-dehydro-3-deoxyheptonate aldolase, Trp-sensitive (348 aa).

It belongs to the class-I DAHP synthase family.

It carries out the reaction D-erythrose 4-phosphate + phosphoenolpyruvate + H2O = 7-phospho-2-dehydro-3-deoxy-D-arabino-heptonate + phosphate. It functions in the pathway metabolic intermediate biosynthesis; chorismate biosynthesis; chorismate from D-erythrose 4-phosphate and phosphoenolpyruvate: step 1/7. Its function is as follows. Stereospecific condensation of phosphoenolpyruvate (PEP) and D-erythrose-4-phosphate (E4P) giving rise to 3-deoxy-D-arabino-heptulosonate-7-phosphate (DAHP). The protein is Phospho-2-dehydro-3-deoxyheptonate aldolase, Trp-sensitive (aroH) of Buchnera aphidicola subsp. Schizaphis graminum (strain Sg).